A 259-amino-acid chain; its full sequence is Dihydroorotate dehydrogenase B (NAD(+)), electron transfer subunit (259 aa).

The FAD-binding FR-type domain maps to 2-102; sequence MQKQNMIVVN…LGPLGHGFPV (101 aa). Residues 53–56, 70–72, and 77–78 each bind FAD; these read RPIS, LYR, and GT. Cys221, Cys226, Cys229, and Cys246 together coordinate [2Fe-2S] cluster.

Belongs to the PyrK family. Heterotetramer of 2 PyrK and 2 PyrD type B subunits. [2Fe-2S] cluster serves as cofactor. FAD is required as a cofactor.

It participates in pyrimidine metabolism; UMP biosynthesis via de novo pathway; orotate from (S)-dihydroorotate (NAD(+) route): step 1/1. In terms of biological role, responsible for channeling the electrons from the oxidation of dihydroorotate from the FMN redox center in the PyrD type B subunit to the ultimate electron acceptor NAD(+). This is Dihydroorotate dehydrogenase B (NAD(+)), electron transfer subunit from Bacillus cereus (strain ATCC 14579 / DSM 31 / CCUG 7414 / JCM 2152 / NBRC 15305 / NCIMB 9373 / NCTC 2599 / NRRL B-3711).